Consider the following 158-residue polypeptide: MLTFTERLPPRHTASSPPPETVLFSLLLTAEERTRSRYRLDSPEGFSLCFRLPRGTILQDRDFLRGENGEIIQIIAKPEPVITITAPSTDLLLKAAYHLGNRHVALEINPDYLRLAPDSVLQAMLEGLGLAVNEEIAPFNPEIGAYQHYHDLEEAKKG.

The protein belongs to the UreE family.

It is found in the cytoplasm. Functionally, involved in urease metallocenter assembly. Binds nickel. Probably functions as a nickel donor during metallocenter assembly. The polypeptide is Urease accessory protein UreE (Microcystis aeruginosa (strain NIES-843 / IAM M-2473)).